The sequence spans 306 residues: MSDGTSNAPTRKHTALPKAQILIEALPWLTRHHGKTVVIKFGGNAMIDEDLKAAFAQDVVFLRHAGLKPVVVHGGGPQISAALDKHGIVSEFKAGLRVTTEDAMDVVRMVLAGQVQRELVGLLNQHGPLAVGLTGEDAHTLTATKHQPEIDGELVDIGRVGEITEIDTGAIEALLADGRIPVVSSIARSQDDHHVYNVNADTAAAALAAALGAETLMVLTDVEGLYEDWPDSDEVISRLTASELEKLLPDLSSGMVPKMEGCLHAVRGGVTTARVIDGRVQHSILLEIFTDEGIGTMVVPDEQGES.

Substrate contacts are provided by residues 75-76 (GG), Arg97, and Asn197.

Belongs to the acetylglutamate kinase family. ArgB subfamily.

Its subcellular location is the cytoplasm. The enzyme catalyses N-acetyl-L-glutamate + ATP = N-acetyl-L-glutamyl 5-phosphate + ADP. Its pathway is amino-acid biosynthesis; L-arginine biosynthesis; N(2)-acetyl-L-ornithine from L-glutamate: step 2/4. Its function is as follows. Catalyzes the ATP-dependent phosphorylation of N-acetyl-L-glutamate. This chain is Acetylglutamate kinase, found in Streptomyces coelicolor (strain ATCC BAA-471 / A3(2) / M145).